The sequence spans 97 residues: TRTDDKPGVNRNMEMQQQQGGFIGHRPRLASFNRASKQLDREKRPVPSGPDPIHHSIPSHAPQHPPSYGKAPYEDDKSIASPGLSNLIGPPPFLDRY.

A disordered region spans residues 1–97; the sequence is TRTDDKPGVN…IGPPPFLDRY (97 aa). Residues P47 and P50 each carry the hydroxyproline modification. P50 carries an O-linked (Ara...) hydroxyproline glycan.

The protein belongs to the CLV3/ESR signal peptide family. The O-glycosylation (arabinosylation) of the hydroxyproline Pro-50 enhances binding affinity of the ESR2Cp peptide for its receptor. Seed endosperm.

The protein localises to the secreted. It is found in the extracellular space. Functionally, extracellular signal peptide that regulates cell fate. This is CLAVATA3/ESR (CLE)-related protein ESR2-C from Zea mays (Maize).